A 647-amino-acid chain; its full sequence is Pumilio homolog 3 (647 aa).

Over residues 1–10 (MEVKGKKKFT) the composition is skewed to basic residues. Residues 1 to 123 (MEVKGKKKFT…KKKKELKQSR (123 aa)) are disordered. An N6-acetyllysine modification is found at Lys-33. A compositionally biased stretch (basic residues) spans 59–68 (PGKKGVKQFK). The span at 102–123 (SGAKKPKWDDFKKKKKELKQSR) shows a compositional bias: basic and acidic residues. Residues 105-117 (KKPKWDDFKKKKK) carry the Nuclear localization signal motif. Residues 142-509 (ESLRRKDCDK…VVLDKSACVL (368 aa)) form the PUM-HD domain. Pumilio repeat units lie at residues 176-211 (HDST…LSKA), 212-247 (KYSR…MLRH), 248-276 (SEAS…ELYG), 288-324 (PTLD…VIKH), 325-360 (SLVH…LAHT), 361-396 (HDGA…VANG), 397-434 (QYSH…IVND), 435-503 (KYGR…VVLD), 504-550 (KSAC…VAEH), 551-595 (PAGH…WASI), and 596-635 (NRGA…KSSS).

In terms of assembly, interacts with PARP1 (via catalytic domain). In terms of tissue distribution, in the adult eye, expressed primarily in retinal ganglion cells and, to a lesser extent, in the pigmented cells.

The protein resides in the nucleus. It is found in the nucleolus. Its subcellular location is the nucleoplasm. It localises to the chromosome. In terms of biological role, inhibits the poly(ADP-ribosyl)ation activity of PARP1 and the degradation of PARP1 by CASP3 following genotoxic stress. Binds to double-stranded RNA or DNA without sequence specificity. Involved in development of the eye and of primordial germ cells. The chain is Pumilio homolog 3 from Mus musculus (Mouse).